A 141-amino-acid polypeptide reads, in one-letter code: Hemoglobin subunit alpha (141 aa).

The Globin domain maps to V1 to R141. S3 is subject to Phosphoserine. 2 positions are modified to N6-succinyllysine: K7 and K11. Position 16 is an N6-acetyllysine; alternate (K16). An N6-succinyllysine; alternate modification is found at K16. Residue Y24 is modified to Phosphotyrosine. Residue S35 is modified to Phosphoserine. N6-succinyllysine is present on K40. S49 is modified (phosphoserine). H58 is a binding site for O2. H87 contacts heme b. S102 carries the post-translational modification Phosphoserine. Phosphothreonine is present on T108. S124 carries the phosphoserine modification. Phosphothreonine occurs at positions 134 and 137. S138 bears the Phosphoserine mark.

It belongs to the globin family. In terms of assembly, heterotetramer of two alpha chains and two beta chains. Red blood cells.

Its function is as follows. Involved in oxygen transport from the lung to the various peripheral tissues. Functionally, hemopressin acts as an antagonist peptide of the cannabinoid receptor CNR1. Hemopressin-binding efficiently blocks cannabinoid receptor CNR1 and subsequent signaling. In Macropus giganteus (Eastern gray kangaroo), this protein is Hemoglobin subunit alpha (HBA).